We begin with the raw amino-acid sequence, 102 residues long: Large ribosomal subunit protein bL21 (102 aa).

It belongs to the bacterial ribosomal protein bL21 family. Part of the 50S ribosomal subunit. Contacts protein L20.

In terms of biological role, this protein binds to 23S rRNA in the presence of protein L20. In Neisseria meningitidis serogroup A / serotype 4A (strain DSM 15465 / Z2491), this protein is Large ribosomal subunit protein bL21.